Here is a 500-residue protein sequence, read N- to C-terminus: MATIAFSRLSIYFCVLLLCHGSMAQLFGPNVNPWHNPRQGGFRECRFDRLQAFEPLRRVRSEAGVTEYFDEKNEQFQCTGTFVIRRVIEPQGLLVPRYSNTPGMVYIIQGRGSMGLTFPGCPATYQQQFQQFLPEGQSQSQKFRDEHQKIHQFRQGDIVALPAGVAHWFYNEGDAPVVALYVFDLNNNANQLEPRQKEFLLAGNNNREQQMYGRSIEQHSGQNIFSGFNNELLSEALGVNALVAKRLQGQNDQRGEIIRVKNGLKLLRPAFAQQQEQAQQQEQAQAQYQVQYSEEQQPSTRCNGLDENFCTIKARLNIENPSHADTYNPRAGRITRLNSQKFPILNLVQLSATRVNLYQNAILSPFWNVNAHSLVYIVQGHARVQVVSNLGKTVFNGVLRPGQLLIIPQHYVVLKKAEHEGCQYISFKTNANSMVSHLAGKNSIFRAMPVDVIANAYRISREQARSLKNNRGEELGAFTPRYQQQTYPGFSNESENEALE.

The first 24 residues, Met1–Ala24, serve as a signal peptide directing secretion. Disulfide bonds link Cys45–Cys78 and Cys121–Cys310. 2 Cupin type-1 domains span residues Leu50 to Lys245 and Leu316 to Arg465. Residues Arg481–Glu493 show a composition bias toward polar residues. The tract at residues Arg481 to Glu500 is disordered.

It belongs to the 11S seed storage protein (globulins) family. In terms of assembly, hexamer; each subunit is composed of an acidic and a basic chain derived from a single precursor and linked by a disulfide bond. In terms of tissue distribution, expressed in endosperm (at protein level).

Its function is as follows. Seed storage protein. This Oryza sativa subsp. japonica (Rice) protein is Glutelin type-B 4 (GLUB4).